The following is a 305-amino-acid chain: Probable lipid kinase YegS-like (305 aa).

The DAGKc domain maps to 1 to 129 (MTQRRAMLIL…VDLGEVGGKL (129 aa)). Residues threonine 39, 65-71 (GDGTLRD), and threonine 92 contribute to the ATP site. Leucine 210, aspartate 213, and leucine 215 together coordinate Mg(2+). Residue glutamate 268 is the Proton acceptor of the active site.

It belongs to the diacylglycerol/lipid kinase family. YegS lipid kinase subfamily. Mg(2+) serves as cofactor. It depends on Ca(2+) as a cofactor.

It localises to the cytoplasm. Its function is as follows. Probably phosphorylates lipids; the in vivo substrate is unknown. The protein is Probable lipid kinase YegS-like of Pseudomonas syringae pv. tomato (strain ATCC BAA-871 / DC3000).